The chain runs to 271 residues: Putative cysteine protease YopT-like blr2140 (271 aa).

A disordered region spans residues Met-1–Thr-81. Over residues Gly-7–Glu-29 the composition is skewed to polar residues. Residues Thr-65–Thr-81 show a composition bias toward low complexity. Cys-100 is an active-site residue. The disordered stretch occupies residues Ser-114–Gln-136. Active-site residues include His-213 and Asp-228.

Belongs to the peptidase C58 family.

In terms of biological role, potential cysteine protease, which may play a central role after invasion of host cell. The polypeptide is Putative cysteine protease YopT-like blr2140 (Bradyrhizobium diazoefficiens (strain JCM 10833 / BCRC 13528 / IAM 13628 / NBRC 14792 / USDA 110)).